The primary structure comprises 511 residues: Phosphoenolpyruvate carboxylase (511 aa).

It belongs to the PEPCase type 2 family. Homotetramer. Mg(2+) serves as cofactor.

The catalysed reaction is oxaloacetate + phosphate = phosphoenolpyruvate + hydrogencarbonate. Catalyzes the irreversible beta-carboxylation of phosphoenolpyruvate (PEP) to form oxaloacetate (OAA), a four-carbon dicarboxylic acid source for the tricarboxylic acid cycle. This is Phosphoenolpyruvate carboxylase from Saccharolobus islandicus (strain M.16.27) (Sulfolobus islandicus).